Consider the following 674-residue polypeptide: tRNA 5-methylaminomethyl-2-thiouridine biosynthesis bifunctional protein MnmC (674 aa).

Residues M1–N237 form a tRNA (mnm(5)s(2)U34)-methyltransferase region. Residues V270–L674 are FAD-dependent cmnm(5)s(2)U34 oxidoreductase.

It in the N-terminal section; belongs to the methyltransferase superfamily. tRNA (mnm(5)s(2)U34)-methyltransferase family. This sequence in the C-terminal section; belongs to the DAO family. FAD serves as cofactor.

Its subcellular location is the cytoplasm. The enzyme catalyses 5-aminomethyl-2-thiouridine(34) in tRNA + S-adenosyl-L-methionine = 5-methylaminomethyl-2-thiouridine(34) in tRNA + S-adenosyl-L-homocysteine + H(+). Catalyzes the last two steps in the biosynthesis of 5-methylaminomethyl-2-thiouridine (mnm(5)s(2)U) at the wobble position (U34) in tRNA. Catalyzes the FAD-dependent demodification of cmnm(5)s(2)U34 to nm(5)s(2)U34, followed by the transfer of a methyl group from S-adenosyl-L-methionine to nm(5)s(2)U34, to form mnm(5)s(2)U34. This Marinomonas sp. (strain MWYL1) protein is tRNA 5-methylaminomethyl-2-thiouridine biosynthesis bifunctional protein MnmC.